Reading from the N-terminus, the 102-residue chain is NADH-quinone oxidoreductase subunit K (102 aa).

3 helical membrane passes run 5–25 (LAHY…GIFL), 31–51 (IILL…FVAF), and 62–82 (VFVF…LAIL).

This sequence belongs to the complex I subunit 4L family. In terms of assembly, NDH-1 is composed of 14 different subunits. Subunits NuoA, H, J, K, L, M, N constitute the membrane sector of the complex.

The protein localises to the cell inner membrane. The catalysed reaction is a quinone + NADH + 5 H(+)(in) = a quinol + NAD(+) + 4 H(+)(out). NDH-1 shuttles electrons from NADH, via FMN and iron-sulfur (Fe-S) centers, to quinones in the respiratory chain. The immediate electron acceptor for the enzyme in this species is believed to be ubiquinone. Couples the redox reaction to proton translocation (for every two electrons transferred, four hydrogen ions are translocated across the cytoplasmic membrane), and thus conserves the redox energy in a proton gradient. This is NADH-quinone oxidoreductase subunit K from Bordetella petrii (strain ATCC BAA-461 / DSM 12804 / CCUG 43448).